The following is a 36-amino-acid chain: Esculentin-2R (36 aa).

Cysteine 30 and cysteine 36 are oxidised to a cystine.

In terms of tissue distribution, expressed by the skin glands.

The protein localises to the secreted. Functionally, antimicrobial peptide. This Pelophylax ridibundus (Marsh frog) protein is Esculentin-2R.